The chain runs to 499 residues: Apolipoprotein N-acyltransferase (499 aa).

Helical transmembrane passes span 17 to 37, 38 to 58, 84 to 104, 131 to 151, 163 to 183, and 198 to 218; these read VLAGIGIAHGGLLWMAPALAL, LWSACRFPVAASLWGFVAVLL, ASIWLFCGAAAAVLVGLWAWL, IWGLAEVLLAGSPLFWIGVGG, LARWFGAGGLATLQLLIGWWL, and RSLLVGLLCLLLAHGFGWSLL. One can recognise a CN hydrolase domain in the interval 232–458; that stretch reads WQPAIPTRSK…EGVGLADLHF (227 aa). Glu-273 (proton acceptor) is an active-site residue. Residue Lys-322 is part of the active site. The active-site Nucleophile is Cys-370. A helical transmembrane segment spans residues 474 to 494; sequence IGLMLFAVVGLGLSRVRSWLI.

Belongs to the CN hydrolase family. Apolipoprotein N-acyltransferase subfamily.

Its subcellular location is the cell inner membrane. It carries out the reaction N-terminal S-1,2-diacyl-sn-glyceryl-L-cysteinyl-[lipoprotein] + a glycerophospholipid = N-acyl-S-1,2-diacyl-sn-glyceryl-L-cysteinyl-[lipoprotein] + a 2-acyl-sn-glycero-3-phospholipid + H(+). The protein operates within protein modification; lipoprotein biosynthesis (N-acyl transfer). In terms of biological role, catalyzes the phospholipid dependent N-acylation of the N-terminal cysteine of apolipoprotein, the last step in lipoprotein maturation. In Prochlorococcus marinus (strain MIT 9313), this protein is Apolipoprotein N-acyltransferase.